Reading from the N-terminus, the 216-residue chain is LexA repressor 1 (216 aa).

Residues 38–58 (TRQIGAAVGLRSMSSVARHLR) constitute a DNA-binding region (H-T-H motif). Residues serine 140 and lysine 177 each act as for autocatalytic cleavage activity in the active site.

Belongs to the peptidase S24 family. Homodimer.

It catalyses the reaction Hydrolysis of Ala-|-Gly bond in repressor LexA.. Its function is as follows. Represses a number of genes involved in the response to DNA damage (SOS response), including recA and lexA. In the presence of single-stranded DNA, RecA interacts with LexA causing an autocatalytic cleavage which disrupts the DNA-binding part of LexA, leading to derepression of the SOS regulon and eventually DNA repair. This chain is LexA repressor 1, found in Nocardia farcinica (strain IFM 10152).